A 582-amino-acid chain; its full sequence is MVKRSKKSKSKRVTLKQKHKVLKKVKEHHKKKAKDAKKLGLHRKPRVEKDPGIPNDWPFKEQELKALEVRRARALEEIEQKKEARKERAKKRKLGLVDDEDTKTEGETIEDLPKVVNVRDNSERAFYKELVKVIELSDVILEVLDARDPLGTRCTDMERMVMQAGPNKHLVLLLNKIDLVPREAAEKWLMYLREEFPAVAFKCSTQEQRSNLGWKSSKASKPSNMLQTSDCLGADTLIKLLKNYSRSHELKKSITVGIIGLPNVGKSSLINSLKRAHVVNVGATPGLTRSLQEVHLDKNVKLLDCPGVVMLKSSGNDASIALRNCKRIEKLDDPVSPVKEILKLCPKDMLVTLYKIPSFEAVDDFLYKVATVRGKLKKGGLVDIDAAARIVLHDWNEGKIPYYTMPPKRDQGGHAESKIVTELAKDFNIDEVYSGESSFIGSLKTVNEFNPVIIPSNGPLNFDETMIEDESKTQTEEEAEHESDDDESMGGEEEEEAGKTKEKSETGRQNVKLYAAESMLNTKKQKAEKKKRKKAKKAGADEEDLMDGDYDFKVDYRKNKDGEDEEFQIDAKIPMAGLLPEE.

Over residues 1–46 the composition is skewed to basic residues; it reads MVKRSKKSKSKRVTLKQKHKVLKKVKEHHKKKAKDAKKLGLHRKPR. Residues 1 to 58 form a disordered region; the sequence is MVKRSKKSKSKRVTLKQKHKVLKKVKEHHKKKAKDAKKLGLHRKPRVEKDPGIPNDWP. Positions 2–49 are basic; the sequence is VKRSKKSKSKRVTLKQKHKVLKKVKEHHKKKAKDAKKLGLHRKPRVEK. 3 consecutive short sequence motifs (nuclear localization signal) follow at residues 5 to 12, 22 to 29, and 69 to 76; these read SKKSKSKR, LKKVKEHH, and VRRARALE. Positions 15–94 form a coiled coil; sequence LKQKHKVLKK…RKERAKKRKL (80 aa). The 185-residue stretch at 127–311 folds into the CP-type G domain; sequence YKELVKVIEL…LLDCPGVVML (185 aa). The short motif at 145-149 is the DARXP motif element; sequence DARDP. Residues 175–178 form a G4 region; the sequence is NKID. A GTP-binding site is contributed by 175-178; sequence NKID. The tract at residues 202–204 is G5; sequence KCS. The interval 260-267 is G1; it reads GLPNVGKS. Residue 263-268 participates in GTP binding; that stretch reads NVGKSS. The interval 281–456 is intermediate; the sequence is VGATPGLTRS…NEFNPVIIPS (176 aa). Positions 286 to 290 are G2; the sequence is GLTRS. GTP is bound by residues 304-307 and glycine 307; that span reads DCPG. A G3 region spans residues 304-307; sequence DCPG. Residues 463 to 551 are acidic; the sequence is DETMIEDESK…EEDLMDGDYD (89 aa). The tract at residues 469-545 is disordered; it reads DESKTQTEEE…KKAGADEEDL (77 aa). Positions 476 to 496 are enriched in acidic residues; the sequence is EEEAEHESDDDESMGGEEEEE. The segment covering 497–506 has biased composition (basic and acidic residues); that stretch reads AGKTKEKSET. The stretch at 515-537 forms a coiled coil; the sequence is AAESMLNTKKQKAEKKKRKKAKK. A Nuclear localization signal 4 motif is present at residues 522-529; it reads TKKQKAEK. Basic residues predominate over residues 523-537; sequence KKQKAEKKKRKKAKK.

The protein belongs to the TRAFAC class YlqF/YawG GTPase family. Interacts with EBP2 and PES. In terms of tissue distribution, mostly expressed in flowers, siliques and inflorescence apex, and, to a lower extent, in stems and leaves.

Its subcellular location is the nucleus. It localises to the nucleolus. Functionally, involved in the differentiation of epidermal cells, probably via the regulation of the expression of meristem-related genes (e.g. CLV3, STM, KNAT1, CUC2 and AG) and of leaf polarity-related genes (e.g. YAB5, FIL, AS2, PHB and PHV). May play a role in regulating cellular proliferation. Necessary for flower development, probably by preventing apical dominance through the down-regulation of AG expression. Required for embryogenesis, leaf and cotyledon development, as well as for leaf polarity establishment. Plays an important role in plant growth and senescence by modulating ribosome biogenesis in nucleolus. Possesses GTPAse activity in vitro. Possesses RNA binding activity in vitro. Associates with ribosomes. This chain is Guanine nucleotide-binding protein-like NSN1, found in Arabidopsis thaliana (Mouse-ear cress).